A 491-amino-acid polypeptide reads, in one-letter code: UDP-GalNAc:beta-1,3-N-acetylgalactosaminyltransferase 2 (491 aa).

Residues 1–2 (MR) are Cytoplasmic-facing. Residues 3-23 (SAAAALSVCVLAVLLHWICWT) traverse the membrane as a helical; Signal-anchor for type II membrane protein segment. Residues 24-491 (DRSAELLGFR…NKCGDPCGCS (468 aa)) are Lumenal-facing. Asn-167 and Asn-230 each carry an N-linked (GlcNAc...) asparagine glycan.

This sequence belongs to the glycosyltransferase 31 family.

The protein resides in the golgi apparatus membrane. Its subcellular location is the endoplasmic reticulum. The enzyme catalyses 3-O-(N-acetyl-beta-D-glucosaminyl-(1-&gt;4)-alpha-D-mannosyl)-L-threonyl-[protein] + UDP-N-acetyl-alpha-D-galactosamine = 3-O-[beta-D-GalNAc-(1-&gt;3)-beta-D-GlcNAc-(1-&gt;4)-alpha-D-Man]-L-Thr-[protein] + UDP + H(+). Its pathway is protein modification; protein glycosylation. In terms of biological role, beta-1,3-N-acetylgalactosaminyltransferase that synthesizes a unique carbohydrate structure, GalNAc-beta-1-3GlcNAc, on N- and O-glycans. Has no galactose nor galactosaminyl transferase activity toward any acceptor substrate. Involved in alpha-dystroglycan (dag1) glycosylation. The chain is UDP-GalNAc:beta-1,3-N-acetylgalactosaminyltransferase 2 (b3galnt2) from Danio rerio (Zebrafish).